We begin with the raw amino-acid sequence, 182 residues long: MATIFDILNSINNKNNNHSNYYSCKRLKSNNNNNNNNFRNNSIKRIDIIPSMDVTITDNNIIIETELAGISKDNIEIDIKDSILTIQGEKKINNNYKQQQQQHSDKTKTNNELPLIEENKKEFRKYLSERSFGNFKRCLDLTSILYQLDLSTIKSNFENGLLIITINKKSDLSNSSFKININ.

One can recognise a sHSP domain in the interval 43–182 (IKRIDIIPSM…SNSSFKININ (140 aa)).

Belongs to the small heat shock protein (HSP20) family.

The protein is Small heat shock protein hspG1 (hspG1) of Dictyostelium discoideum (Social amoeba).